Reading from the N-terminus, the 465-residue chain is Phosphatidylserine synthase 1 (465 aa).

Residues 1-35 (MATTFRSQTLSKDDVNYRMHFRMINEQQVEDITIQ) lie on the Cytoplasmic side of the membrane. Residues 36 to 56 (FFYKPHTISLLTVTVLSLMYF) traverse the membrane as a helical segment. Residues 57 to 70 (AFTRDDGDPDSNLR) lie on the Lumenal side of the membrane. A helical transmembrane segment spans residues 71 to 91 (VGLILLVSFFLVISVLAFPNG). The Cytoplasmic segment spans residues 92–102 (PFTRPHPAIWR). A helical membrane pass occupies residues 103–123 (IVFGLSVLYFLFLVFIIFLNW). Residues 124-286 (DQVKALMFWL…WLDPKSSLQR (163 aa)) are Lumenal-facing. Residues 287–307 (VMGVYLFMIIWQLTELNTFFL) traverse the membrane as a helical segment. The Cytoplasmic portion of the chain corresponds to 308-309 (KH). A helical transmembrane segment spans residues 310 to 330 (IFVFPACHALSWCRILFIGII). Residues 331–355 (TAPTVRQYYAYLTDTQCKRVGTQCW) lie on the Lumenal side of the membrane. Residues 356–376 (VFGAIAFLEALACIKFGQDLF) traverse the membrane as a helical segment. The Cytoplasmic portion of the chain corresponds to 377–380 (SKTQ). A helical transmembrane segment spans residues 381–401 (ILYVILWLVCLAFITFLCLYV). The Lumenal segment spans residues 402–465 (MVWYAENYGP…DSRTINGMEK (64 aa)). The tract at residues 446–465 (CSTRKRRDSGDSRTINGMEK) is disordered.

It belongs to the phosphatidyl serine synthase family.

It is found in the endoplasmic reticulum membrane. It carries out the reaction a 1,2-diacyl-sn-glycero-3-phosphoethanolamine + L-serine = a 1,2-diacyl-sn-glycero-3-phospho-L-serine + ethanolamine. The enzyme catalyses a 1,2-diacyl-sn-glycero-3-phosphocholine + L-serine = a 1,2-diacyl-sn-glycero-3-phospho-L-serine + choline. Its pathway is phospholipid metabolism; phosphatidylserine biosynthesis. In terms of biological role, catalyzes a base-exchange reaction in which the polar head group of phosphatidylethanolamine (PE) or phosphatidylcholine (PC) is replaced by L-serine. Catalyzes mainly the conversion of phosphatidylcholine but also converts, in vitro and to a lesser extent, phosphatidylethanolamine. The polypeptide is Phosphatidylserine synthase 1 (ptdss1) (Danio rerio (Zebrafish)).